The chain runs to 136 residues: DNA-binding protein H-NS (136 aa).

Residues 13 to 67 (TLRAQARECTLETLEEMLEKLEVVVNERREEDSQAQAEIEERTRKLQQYREMLIA) adopt a coiled-coil conformation. The DNA-binding element occupies 113–118 (QGRTPA).

The protein belongs to the histone-like protein H-NS family. In terms of assembly, interacts with YmoA in the absence of DNA. Homodimer that oligomerizes on DNA into higher-order complexes that form bridges between disparate regions of DNA compacting it. Interacts with YmoA.

It is found in the cytoplasm. Its subcellular location is the nucleoid. A DNA-binding protein implicated in transcriptional repression and chromosome organization and compaction. Binds nucleation sites in AT-rich DNA and bridges them, forming higher-order nucleoprotein complexes and condensing the chromosome. As many horizontally transferred genes are AT-rich, it plays a central role in silencing foreign genes. A subset of genes are repressed by H-NS in association with YmoA. Complements a number of hns deficiencies in E.coli; represses the bgl operon, represses hemolysin expression. The protein is DNA-binding protein H-NS of Yersinia enterocolitica.